A 364-amino-acid chain; its full sequence is E3 ubiquitin-protein ligase rnf146 (364 aa).

The disordered stretch occupies residues 18-37; the sequence is KKVSGEAVPEGSGSPSSPSL. Positions 22-34 are enriched in low complexity; that stretch reads GEAVPEGSGSPSS. The RING-type zinc-finger motif lies at 42 to 80; it reads CPICLQSCVHPVRLPCRHIFCFLCVKGASWHSKRCALCR. A WWE domain is found at 102-178; that stretch reads SATGGCGTGS…EHGRRRRMKR (77 aa). Tyrosine 118, arginine 121, tryptophan 125, tyrosine 155, glutamine 164, arginine 174, and lysine 186 together coordinate a glycoprotein. Disordered regions lie at residues 217–262 and 279–364; these read AAAE…PASS and NEQE…VTKV. Composition is skewed to acidic residues over residues 281-295 and 308-322; these read QEPE…DDSA and TSDD…DENE.

Its subcellular location is the cytoplasm. It localises to the cytosol. The protein resides in the nucleus. The enzyme catalyses S-ubiquitinyl-[E2 ubiquitin-conjugating enzyme]-L-cysteine + [acceptor protein]-L-lysine = [E2 ubiquitin-conjugating enzyme]-L-cysteine + N(6)-ubiquitinyl-[acceptor protein]-L-lysine.. Its pathway is protein modification; protein ubiquitination. E3 ubiquitin-protein ligase that specifically binds poly-ADP-ribosylated proteins and mediates their ubiquitination and subsequent degradation. May regulate many important biological processes, such as cell survival and DNA damage response. Acts as an activator of the Wnt signaling pathway by mediating the ubiquitination of poly-ADP-ribosylated proteins. Neuroprotective protein. Protects against cell death induced by DNA damaging agents and rescues cells from G1 arrest. Promotes cell survival after gamma-irradiation. Facilitates DNA repair. The chain is E3 ubiquitin-protein ligase rnf146 (rnf146) from Danio rerio (Zebrafish).